A 250-amino-acid polypeptide reads, in one-letter code: 1-(5-phosphoribosyl)-5-[(5-phosphoribosylamino)methylideneamino] imidazole-4-carboxamide isomerase (250 aa).

The active-site Proton acceptor is Asp12. The active-site Proton donor is Asp134.

This sequence belongs to the HisA/HisF family.

The protein localises to the cytoplasm. The catalysed reaction is 1-(5-phospho-beta-D-ribosyl)-5-[(5-phospho-beta-D-ribosylamino)methylideneamino]imidazole-4-carboxamide = 5-[(5-phospho-1-deoxy-D-ribulos-1-ylimino)methylamino]-1-(5-phospho-beta-D-ribosyl)imidazole-4-carboxamide. It participates in amino-acid biosynthesis; L-histidine biosynthesis; L-histidine from 5-phospho-alpha-D-ribose 1-diphosphate: step 4/9. This is 1-(5-phosphoribosyl)-5-[(5-phosphoribosylamino)methylideneamino] imidazole-4-carboxamide isomerase from Actinobacillus pleuropneumoniae serotype 7 (strain AP76).